We begin with the raw amino-acid sequence, 161 residues long: F-box only protein 48 (161 aa).

A disordered region spans residues 1 to 25 (MKKTSKKNNNFKIPGTELNSADAER). In terms of domain architecture, F-box spans 32–79 (RNFVELLPLEVTYKIFSQLDIQSLCRASRTCTGWNCAIRNNDSLWKPH).

The sequence is that of F-box only protein 48 (Fbxo48) from Mus musculus (Mouse).